Here is a 209-residue protein sequence, read N- to C-terminus: Protein GrpE (209 aa).

Positions 1-13 (MSNDSSKAKQNQV) are enriched in polar residues. Residues 1–27 (MSNDSSKAKQNQVDEAVEGEIITDNEN) form a disordered region. Residues 15 to 27 (EAVEGEIITDNEN) are compositionally biased toward acidic residues.

The protein belongs to the GrpE family. Homodimer.

The protein resides in the cytoplasm. Functionally, participates actively in the response to hyperosmotic and heat shock by preventing the aggregation of stress-denatured proteins, in association with DnaK and GrpE. It is the nucleotide exchange factor for DnaK and may function as a thermosensor. Unfolded proteins bind initially to DnaJ; upon interaction with the DnaJ-bound protein, DnaK hydrolyzes its bound ATP, resulting in the formation of a stable complex. GrpE releases ADP from DnaK; ATP binding to DnaK triggers the release of the substrate protein, thus completing the reaction cycle. Several rounds of ATP-dependent interactions between DnaJ, DnaK and GrpE are required for fully efficient folding. This is Protein GrpE from Shewanella sediminis (strain HAW-EB3).